A 361-amino-acid polypeptide reads, in one-letter code: MTQVYNFSSGPAMLPVEVLRRAEQELCNWHGLGTSVMEISHRSKEFIEVAQQSEQDLRDLLKIPSNYKVLFCHGGARAQFAALPLNLLGDKTTADYIDGGYWAHSAITEAQKYCTPNTIDVKTSVDGLLGIKPMKEWQLSDDAAYVHYCPNETIDGVAIDELPDFGDKVVIGDYSSTILSGPLDVSRFGVIYAGAQKNIGPAGLTLVIVREDLLGKARREVPSILDYTVLAENDSMFNTPPTFAWYLSGLVFKWLKEQGGLVEMHKRNQAKAELLYATIDKSDFYRSRVALANRSWMNVPFQLADPALDKVFLSEAEAIGLQALKGHRVVGGMRASIYNAMPLAGVKTLTDFMVDFERRHG.

Residues Ser-9 and Arg-42 each coordinate L-glutamate. Pyridoxal 5'-phosphate is bound by residues 76–77, Trp-102, Thr-153, Asp-173, and Gln-196; that span reads AR. At Lys-197 the chain carries N6-(pyridoxal phosphate)lysine. 238–239 lines the pyridoxal 5'-phosphate pocket; that stretch reads NT.

The protein belongs to the class-V pyridoxal-phosphate-dependent aminotransferase family. SerC subfamily. As to quaternary structure, homodimer. The cofactor is pyridoxal 5'-phosphate.

It localises to the cytoplasm. It catalyses the reaction O-phospho-L-serine + 2-oxoglutarate = 3-phosphooxypyruvate + L-glutamate. The enzyme catalyses 4-(phosphooxy)-L-threonine + 2-oxoglutarate = (R)-3-hydroxy-2-oxo-4-phosphooxybutanoate + L-glutamate. It participates in amino-acid biosynthesis; L-serine biosynthesis; L-serine from 3-phospho-D-glycerate: step 2/3. The protein operates within cofactor biosynthesis; pyridoxine 5'-phosphate biosynthesis; pyridoxine 5'-phosphate from D-erythrose 4-phosphate: step 3/5. Catalyzes the reversible conversion of 3-phosphohydroxypyruvate to phosphoserine and of 3-hydroxy-2-oxo-4-phosphonooxybutanoate to phosphohydroxythreonine. This Serratia proteamaculans (strain 568) protein is Phosphoserine aminotransferase.